An 82-amino-acid chain; its full sequence is MAEVSSAPVRRPFHRRRKTCPFSGANAPRIDYKDVRLLQRYISERGKIVPSRITAVSQKKQRELAQAIKRARFLGLLPYIVS.

The protein belongs to the bacterial ribosomal protein bS18 family. In terms of assembly, part of the 30S ribosomal subunit. Forms a tight heterodimer with protein bS6.

Binds as a heterodimer with protein bS6 to the central domain of the 16S rRNA, where it helps stabilize the platform of the 30S subunit. In Rhizobium meliloti (strain 1021) (Ensifer meliloti), this protein is Small ribosomal subunit protein bS18.